The primary structure comprises 444 residues: Xylose isomerase (444 aa).

Active-site residues include His101 and Asp104. Mg(2+)-binding residues include Glu232, Glu268, His271, Asp296, Asp307, Asp309, and Asp339.

Belongs to the xylose isomerase family. In terms of assembly, homotetramer. Mg(2+) is required as a cofactor.

Its subcellular location is the cytoplasm. The catalysed reaction is alpha-D-xylose = alpha-D-xylulofuranose. The chain is Xylose isomerase from Thermotoga petrophila (strain ATCC BAA-488 / DSM 13995 / JCM 10881 / RKU-1).